The chain runs to 1040 residues: Regulator of telomere elongation helicase 1 homolog (1040 aa).

The region spanning 52 to 355 (RGINVEFPFE…KGLLLKLQEL (304 aa)) is the Helicase ATP-binding domain. 87-94 (SPTGTGKT) lines the ATP pocket. Positions 117 to 137 (RKNSAIPWSDSDEPLSQSGGG) are disordered. Cys181, Cys202, Cys210, and Cys246 together coordinate [4Fe-4S] cluster. The DEAH box signature appears at 289–292 (DEAH). A disordered region spans residues 926-949 (KVPESQGSASSSVLTAKGNGGGDK). Polar residues predominate over residues 930–939 (SQGSASSSVL). The PIP-box; degenerate signature appears at 992-999 (QSIVQLFC).

It belongs to the helicase family. RAD3/XPD subfamily.

It is found in the nucleus. The catalysed reaction is ATP + H2O = ADP + phosphate + H(+). Its function is as follows. A probable ATP-dependent DNA helicase implicated in DNA replication, DNA repair and the maintenance of genomic stability. Acts as an anti-recombinase to counteract toxic recombination and limit crossover during meiosis. Regulates meiotic recombination and crossover homeostasis by physically dissociating strand invasion events and thereby promotes noncrossover repair by meiotic synthesis dependent strand annealing (SDSA) as well as disassembly of D loop recombination intermediates. Also plays a role in preserving the stability of 45S rDNA repeats. In Arabidopsis thaliana (Mouse-ear cress), this protein is Regulator of telomere elongation helicase 1 homolog.